A 156-amino-acid polypeptide reads, in one-letter code: Endoribonuclease YbeY (156 aa).

Residues His122, His126, and His132 each contribute to the Zn(2+) site.

The protein belongs to the endoribonuclease YbeY family. It depends on Zn(2+) as a cofactor.

It is found in the cytoplasm. In terms of biological role, single strand-specific metallo-endoribonuclease involved in late-stage 70S ribosome quality control and in maturation of the 3' terminus of the 16S rRNA. The sequence is that of Endoribonuclease YbeY from Syntrophomonas wolfei subsp. wolfei (strain DSM 2245B / Goettingen).